A 1207-amino-acid chain; its full sequence is Chromosomal serine/threonine-protein kinase JIL-1 (1207 aa).

Residues Met1–Arg19 show a composition bias toward polar residues. Disordered stretches follow at residues Met1 to Arg119, Gln164 to Leu183, and Ser210 to Asp230. A phosphoserine mark is found at Ser29 and Ser31. Residues Leu45–Gly69 show a composition bias toward polar residues. A compositionally biased stretch (low complexity) spans Asn88–Asn97. Residues Ser98 to Asn108 are compositionally biased toward polar residues. The span at Ser109–Ala118 shows a compositional bias: low complexity. A compositionally biased stretch (acidic residues) spans Gln164–Glu178. Polar residues predominate over residues Thr213–Pro226. Positions Phe261–Phe530 constitute a Protein kinase 1 domain. ATP is bound by residues Leu267–Val275 and Lys293. Asp389 (proton acceptor) is an active-site residue. Position 424 is a phosphoserine (Ser424). Residues Asn531–Arg599 form the AGC-kinase C-terminal domain. Thr588 bears the Phosphothreonine mark. A Protein kinase 2 domain is found at Leu623–Leu886. ATP-binding positions include Thr629–Cys637 and Lys652. The active-site Proton acceptor is Asp739. Thr1045 carries the post-translational modification Phosphothreonine. Position 1047 is a phosphoserine (Ser1047). The segment at Thr1168–Ala1197 is disordered.

This sequence belongs to the protein kinase superfamily. Ser/Thr protein kinase family. As to quaternary structure, interacts with lola. Interacts with proteins of the male specific lethal (MSL) dosage compensation complex; this interaction is mediated by the kinase domains. Requires Mg(2+) as cofactor. In terms of processing, autophosphorylated in vitro.

It is found in the nucleus. The protein localises to the chromosome. The catalysed reaction is L-seryl-[protein] + ATP = O-phospho-L-seryl-[protein] + ADP + H(+). It carries out the reaction L-threonyl-[protein] + ATP = O-phospho-L-threonyl-[protein] + ADP + H(+). Functionally, phosphorylates 'Ser-10' of histone H3. May regulate gene expression by establishing or maintaining the structure of more open chromatin regions. Also required for normal polytene chromosome structure, for oogenesis and for viability throughout development. Regulates the structure of polytene chromosomes in salivary glands. May phosphorylate 'Ser-1' of histone H2A. In Drosophila melanogaster (Fruit fly), this protein is Chromosomal serine/threonine-protein kinase JIL-1.